Reading from the N-terminus, the 365-residue chain is MINLGDKQSTIVVAMSGGVDSSAVAAMLHEQGHNVIGITLQLYDHGMAVGKKNACCAGQDIYDAKMVANKLGIPHYVLDYESKFKESVIDNFVDSYLQGETPLPCVRCNKSVKFRDLIKTARELGADKLATGHYVRKINGDNGAELYTGLDPAKDQSYFLFTTTKEQLEYLRFPLGGLTKDETRKLASKFGLEVADKPDSQDICFVPDGNYKSVINKIRPNSSESGKIIHVNGFKLGEHSGIINYTIGQRRGLGIAYNEPLYVVKIDPKDNIVYVGPESALNVQEFIIRDVNWLADEIKDNEKLEVAVKIRSTRPPRLAEISKLGDDKMKVKFLCAEKAVAPGQACVIYAGERVLGGGWITREIR.

ATP-binding positions include alanine 14–serine 21 and leucine 40. The active-site Nucleophile is the cysteine 108. Cysteine 108 and cysteine 204 are oxidised to a cystine. Glycine 132 contributes to the ATP binding site. Positions lysine 154 to glutamine 156 are interaction with tRNA. Cysteine 204 serves as the catalytic Cysteine persulfide intermediate.

This sequence belongs to the MnmA/TRMU family.

The protein resides in the cytoplasm. It catalyses the reaction S-sulfanyl-L-cysteinyl-[protein] + uridine(34) in tRNA + AH2 + ATP = 2-thiouridine(34) in tRNA + L-cysteinyl-[protein] + A + AMP + diphosphate + H(+). Its function is as follows. Catalyzes the 2-thiolation of uridine at the wobble position (U34) of tRNA, leading to the formation of s(2)U34. This Rickettsia massiliae (strain Mtu5) protein is tRNA-specific 2-thiouridylase MnmA.